We begin with the raw amino-acid sequence, 230 residues long: uncharacterized protein (230 aa).

Residues 1–11 (MPVPSVTVTTD) show a composition bias toward polar residues. Positions 1 to 88 (MPVPSVTVTT…TLKRPTSNSI (88 aa)) are disordered. Residues 63 to 73 (DDQHRHSDVHS) are compositionally biased toward basic and acidic residues. Positions 79-88 (TLKRPTSNSI) are enriched in polar residues. S106 is modified (phosphoserine). Basic and acidic residues predominate over residues 156–179 (LKREDSRVSSTKKEHINDHTDMHS). The segment at 156–203 (LKREDSRVSSTKKEHINDHTDMHSTRSKVTTNSQGSSLEPNKLNMAVE) is disordered. Over residues 182 to 194 (SKVTTNSQGSSLE) the composition is skewed to polar residues.

This is an uncharacterized protein from Saccharomyces cerevisiae (strain ATCC 204508 / S288c) (Baker's yeast).